Consider the following 753-residue polypeptide: LON peptidase N-terminal domain and RING finger protein 3 (753 aa).

A disordered region spans residues 17 to 57 (GSNNLELAEPEEPGTSAAAGQSAAHPEEVTPEGSQALGAQE). One copy of the TPR 1 repeat lies at 72–105 (CKVLLTQADALASEGHLREALEVYRQLSERQQLV). Residues 159–197 (CKKCHGFLSDPVSLWCGHTFCKLCLERGRAADRRCALCG) form an RING-type 1 zinc finger. 3 TPR repeats span residues 244-277 (ASQLRHEGNRLFREHQVEAALLKYNEAVRLAPND), 279-311 (LLYSNRSQIYFTLESHEDALHDAEIACKLRPMG), and 313-345 (KAHFRKAQALATLGKVKEALKEFLYCVSLDGKN). Residues 351 to 450 (EAQRENLELP…QGAKPDLSNP (100 aa)) are disordered. A compositionally biased stretch (low complexity) spans 363–382 (SNQEGAAAAEESSSLANSAQ). The segment covering 386–413 (SSKEDRKKDQEGEDRDAASVRTGKCQEK) has biased composition (basic and acidic residues). The RING-type 2 zinc finger occupies 461–499 (CSLCMRLFYEPVTTPCGHTFCLKCLERCLDHNAKCPLCK). The Lon N-terminal domain maps to 540–749 (MEELSNLNKN…GIRRILAFIS (210 aa)).

The chain is LON peptidase N-terminal domain and RING finger protein 3 (Lonrf3) from Mus musculus (Mouse).